A 176-amino-acid polypeptide reads, in one-letter code: PRELI domain-containing protein 2 (176 aa).

In terms of domain architecture, PRELI/MSF1 spans 1-175; sequence MGIAVEARKV…ILRERCGCPF (175 aa).

This is PRELI domain-containing protein 2 (prelid2) from Xenopus tropicalis (Western clawed frog).